A 518-amino-acid chain; its full sequence is Glutamate--cysteine ligase (518 aa).

It belongs to the glutamate--cysteine ligase type 1 family. Type 1 subfamily.

The enzyme catalyses L-cysteine + L-glutamate + ATP = gamma-L-glutamyl-L-cysteine + ADP + phosphate + H(+). It participates in sulfur metabolism; glutathione biosynthesis; glutathione from L-cysteine and L-glutamate: step 1/2. The chain is Glutamate--cysteine ligase from Shigella boydii serotype 4 (strain Sb227).